The following is a 305-amino-acid chain: Nucleotide-binding protein Mjls_2437 (305 aa).

Gly28–Gly35 is a binding site for ATP. Asp79–Ser82 is a binding site for GTP.

The protein belongs to the RapZ-like family.

Functionally, displays ATPase and GTPase activities. This Mycobacterium sp. (strain JLS) protein is Nucleotide-binding protein Mjls_2437.